The primary structure comprises 72 residues: Protein Kish (72 aa).

Positions 1-26 (MSALFNFRSLLQVILLLICSCSYVHG) are cleaved as a signal peptide. Residues 27–53 (QWPSLLDRYKNHEVLGAFWKMARVGER) lie on the Lumenal side of the membrane. Residues 54–72 (ASPYVSLACILMAISQFNS) form a helical membrane-spanning segment.

This sequence belongs to the KISH family.

Its subcellular location is the endoplasmic reticulum membrane. It localises to the golgi apparatus membrane. Its function is as follows. Involved in the early part of the secretory pathway. The protein is Protein Kish of Saccharomyces cerevisiae (strain ATCC 204508 / S288c) (Baker's yeast).